We begin with the raw amino-acid sequence, 204 residues long: dTTP/UTP pyrophosphatase (204 aa).

Aspartate 76 serves as the catalytic Proton acceptor.

Belongs to the Maf family. YhdE subfamily. It depends on a divalent metal cation as a cofactor.

The protein resides in the cytoplasm. The enzyme catalyses dTTP + H2O = dTMP + diphosphate + H(+). It carries out the reaction UTP + H2O = UMP + diphosphate + H(+). In terms of biological role, nucleoside triphosphate pyrophosphatase that hydrolyzes dTTP and UTP. May have a dual role in cell division arrest and in preventing the incorporation of modified nucleotides into cellular nucleic acids. The sequence is that of dTTP/UTP pyrophosphatase from Salinibacter ruber (strain DSM 13855 / M31).